The chain runs to 537 residues: CTP synthase (537 aa).

Residues 1–267 (MAKFVFVTGG…ADIVLDKLGI (267 aa)) are amidoligase domain. Ser-13 contributes to the CTP binding site. A UTP-binding site is contributed by Ser-13. 14–19 (SLGKGI) serves as a coordination point for ATP. Residue Tyr-54 participates in L-glutamine binding. Asp-71 lines the ATP pocket. Mg(2+)-binding residues include Asp-71 and Glu-141. Residues 148-150 (DIE), 188-193 (KTKPTQ), and Lys-224 each bind CTP. UTP is bound by residues 188–193 (KTKPTQ) and Lys-224. Residues 292–534 (TIALVGKYVS…IGAARKYKES (243 aa)) form the Glutamine amidotransferase type-1 domain. Gly-354 lines the L-glutamine pocket. Catalysis depends on Cys-381, which acts as the Nucleophile; for glutamine hydrolysis. L-glutamine contacts are provided by residues 382–385 (LGMQ), Glu-405, and Arg-462. Active-site residues include His-507 and Glu-509.

Belongs to the CTP synthase family. As to quaternary structure, homotetramer.

It carries out the reaction UTP + L-glutamine + ATP + H2O = CTP + L-glutamate + ADP + phosphate + 2 H(+). The catalysed reaction is L-glutamine + H2O = L-glutamate + NH4(+). It catalyses the reaction UTP + NH4(+) + ATP = CTP + ADP + phosphate + 2 H(+). It functions in the pathway pyrimidine metabolism; CTP biosynthesis via de novo pathway; CTP from UDP: step 2/2. Its activity is regulated as follows. Allosterically activated by GTP, when glutamine is the substrate; GTP has no effect on the reaction when ammonia is the substrate. The allosteric effector GTP functions by stabilizing the protein conformation that binds the tetrahedral intermediate(s) formed during glutamine hydrolysis. Inhibited by the product CTP, via allosteric rather than competitive inhibition. Functionally, catalyzes the ATP-dependent amination of UTP to CTP with either L-glutamine or ammonia as the source of nitrogen. Regulates intracellular CTP levels through interactions with the four ribonucleotide triphosphates. The polypeptide is CTP synthase (Pelotomaculum thermopropionicum (strain DSM 13744 / JCM 10971 / SI)).